A 105-amino-acid polypeptide reads, in one-letter code: Large ribosomal subunit protein bL21 (105 aa).

The protein belongs to the bacterial ribosomal protein bL21 family. As to quaternary structure, part of the 50S ribosomal subunit. Contacts protein L20.

In terms of biological role, this protein binds to 23S rRNA in the presence of protein L20. In Rhizobium johnstonii (strain DSM 114642 / LMG 32736 / 3841) (Rhizobium leguminosarum bv. viciae), this protein is Large ribosomal subunit protein bL21.